Here is a 211-residue protein sequence, read N- to C-terminus: uncharacterized protein (211 aa).

The first 20 residues, 1 to 20, serve as a signal peptide directing secretion; it reads MSRVQISTVLAIDTATPAVT.

It to M.leprae ML0378.

This is an uncharacterized protein from Mycobacterium tuberculosis (strain CDC 1551 / Oshkosh).